The primary structure comprises 339 residues: Cathepsin B (339 aa).

A signal peptide spans 1–17; the sequence is MWQLWASLCCLLALADA. The propeptide at 18 to 79 is activation peptide; the sequence is RSRPSFHPLS…QRVMFTEDLK (62 aa). 6 cysteine pairs are disulfide-bonded: Cys93/Cys122, Cys105/Cys150, Cys141/Cys207, Cys142/Cys146, Cys179/Cys211, and Cys187/Cys198. Cys108 is an active-site residue. N-linked (GlcNAc...) asparagine glycosylation is present at Asn192. Residue Lys220 is modified to N6-acetyllysine. Active-site residues include His278 and Asn298. Residues 334–339 constitute a propeptide that is removed on maturation; the sequence is QYWEKI.

Belongs to the peptidase C1 family. In terms of assembly, dimer of a heavy chain and a light chain cross-linked by a disulfide bond. Interacts with SRPX2. Directly interacts with SHKBP1.

The protein resides in the lysosome. Its subcellular location is the melanosome. It is found in the secreted. The protein localises to the extracellular space. It localises to the apical cell membrane. The enzyme catalyses Hydrolysis of proteins with broad specificity for peptide bonds. Preferentially cleaves -Arg-Arg-|-Xaa bonds in small molecule substrates (thus differing from cathepsin L). In addition to being an endopeptidase, shows peptidyl-dipeptidase activity, liberating C-terminal dipeptides.. Its function is as follows. Thiol protease which is believed to participate in intracellular degradation and turnover of proteins. Cleaves matrix extracellular phosphoglycoprotein MEPE. Involved in the solubilization of cross-linked TG/thyroglobulin in the thyroid follicle lumen. Has also been implicated in tumor invasion and metastasis. This Pongo abelii (Sumatran orangutan) protein is Cathepsin B (CTSB).